A 330-amino-acid chain; its full sequence is AH receptor-interacting protein (330 aa).

A PPIase FKBP-type domain is found at 31 to 121; it reads GTKATFHYRT…KDPLEGQRHC (91 aa). Phosphoserine is present on serine 43. TPR repeat units follow at residues 179-212, 231-264, and 265-298; these read VPLI…LKNL, TPLL…YDDN, and VKAY…DPAL.

In terms of assembly, interacts with RET in the pituitary gland; this interaction prevents the formation of the AIP-survivin complex. Widely expressed. Higher levels seen in the heart, placenta and skeletal muscle. Not expressed in the liver.

The protein resides in the cytoplasm. Functionally, may play a positive role in AHR-mediated (aromatic hydrocarbon receptor) signaling, possibly by influencing its receptivity for ligand and/or its nuclear targeting. Its function is as follows. Cellular negative regulator of the hepatitis B virus (HBV) X protein. This chain is AH receptor-interacting protein (AIP), found in Homo sapiens (Human).